A 414-amino-acid polypeptide reads, in one-letter code: Serine hydroxymethyltransferase (414 aa).

Residues leucine 116 and 120 to 122 (GHL) contribute to the (6S)-5,6,7,8-tetrahydrofolate site. Position 224 is an N6-(pyridoxal phosphate)lysine (lysine 224). (6S)-5,6,7,8-tetrahydrofolate contacts are provided by residues glutamate 240 and 348 to 350 (SPF).

The protein belongs to the SHMT family. Homodimer. The cofactor is pyridoxal 5'-phosphate.

Its subcellular location is the cytoplasm. The catalysed reaction is (6R)-5,10-methylene-5,6,7,8-tetrahydrofolate + glycine + H2O = (6S)-5,6,7,8-tetrahydrofolate + L-serine. Its pathway is one-carbon metabolism; tetrahydrofolate interconversion. It participates in amino-acid biosynthesis; glycine biosynthesis; glycine from L-serine: step 1/1. Functionally, catalyzes the reversible interconversion of serine and glycine with tetrahydrofolate (THF) serving as the one-carbon carrier. This reaction serves as the major source of one-carbon groups required for the biosynthesis of purines, thymidylate, methionine, and other important biomolecules. Also exhibits THF-independent aldolase activity toward beta-hydroxyamino acids, producing glycine and aldehydes, via a retro-aldol mechanism. In Campylobacter jejuni (strain RM1221), this protein is Serine hydroxymethyltransferase.